Here is a 502-residue protein sequence, read N- to C-terminus: Probable glycine dehydrogenase (decarboxylating) subunit 2 (502 aa).

Position 273 is an N6-(pyridoxal phosphate)lysine (lysine 273).

This sequence belongs to the GcvP family. C-terminal subunit subfamily. The glycine cleavage system is composed of four proteins: P, T, L and H. In this organism, the P 'protein' is a heterodimer of two subunits. Requires pyridoxal 5'-phosphate as cofactor.

The enzyme catalyses N(6)-[(R)-lipoyl]-L-lysyl-[glycine-cleavage complex H protein] + glycine + H(+) = N(6)-[(R)-S(8)-aminomethyldihydrolipoyl]-L-lysyl-[glycine-cleavage complex H protein] + CO2. Functionally, the glycine cleavage system catalyzes the degradation of glycine. The P protein binds the alpha-amino group of glycine through its pyridoxal phosphate cofactor; CO(2) is released and the remaining methylamine moiety is then transferred to the lipoamide cofactor of the H protein. This is Probable glycine dehydrogenase (decarboxylating) subunit 2 from Thermococcus onnurineus (strain NA1).